The sequence spans 177 residues: Large ribosomal subunit protein uL6 (177 aa).

The protein belongs to the universal ribosomal protein uL6 family. Part of the 50S ribosomal subunit.

Functionally, this protein binds to the 23S rRNA, and is important in its secondary structure. It is located near the subunit interface in the base of the L7/L12 stalk, and near the tRNA binding site of the peptidyltransferase center. In Pseudoalteromonas atlantica (strain T6c / ATCC BAA-1087), this protein is Large ribosomal subunit protein uL6.